The following is a 198-amino-acid chain: Proteasome subunit beta 1 (198 aa).

A propeptide spans 1 to 8 (removed in mature form; by autocatalysis); sequence MSMYMPGA. The active-site Nucleophile is Thr-9.

It belongs to the peptidase T1B family. In terms of assembly, the 20S proteasome core is composed of 14 alpha and 14 beta subunits that assemble into four stacked heptameric rings, resulting in a barrel-shaped structure. The two inner rings, each composed of seven catalytic beta subunits, are sandwiched by two outer rings, each composed of seven alpha subunits. The catalytic chamber with the active sites is on the inside of the barrel. Has a gated structure, the ends of the cylinder being occluded by the N-termini of the alpha-subunits. Is capped at one or both ends by the proteasome regulatory ATPase, PAN.

It is found in the cytoplasm. It catalyses the reaction Cleavage of peptide bonds with very broad specificity.. With respect to regulation, the formation of the proteasomal ATPase PAN-20S proteasome complex, via the docking of the C-termini of PAN into the intersubunit pockets in the alpha-rings, triggers opening of the gate for substrate entry. Interconversion between the open-gate and close-gate conformations leads to a dynamic regulation of the 20S proteasome proteolysis activity. Component of the proteasome core, a large protease complex with broad specificity involved in protein degradation. The protein is Proteasome subunit beta 1 of Nitrosopumilus maritimus (strain SCM1).